An 82-amino-acid polypeptide reads, in one-letter code: U1-theraphotoxin-Ct1b (82 aa).

An N-terminal signal peptide occupies residues Met-1–Ala-23. The propeptide occupies Glu-24–Arg-44.

It belongs to the neurotoxin 12 (Hwtx-2) family. 03 (juruin) subfamily. In terms of processing, contains 3 disulfide bonds. Two different connectivities are observed in similar proteins (C1-C3, C2-C5, C4-C6 or C1-C4, C2-C5, C3-C6). In terms of tissue distribution, expressed by the venom gland.

The protein resides in the secreted. This toxin causes paralysis and death to sheep blowflies. It does not target insect sodium channels. The sequence is that of U1-theraphotoxin-Ct1b from Coremiocnemis tropix (Australian tarantula spider).